We begin with the raw amino-acid sequence, 361 residues long: Probable dual-specificity RNA methyltransferase RlmN (361 aa).

Glutamate 91 acts as the Proton acceptor in catalysis. The 233-residue stretch at 97–329 (QHYGLSVCVT…KKKGGNCVVR (233 aa)) folds into the Radical SAM core domain. An intrachain disulfide couples cysteine 104 to cysteine 340. Cysteine 111, cysteine 115, and cysteine 118 together coordinate [4Fe-4S] cluster. Residues 163-164 (GE), serine 195, 218-220 (SLH), and asparagine 296 each bind S-adenosyl-L-methionine. The active-site S-methylcysteine intermediate is the cysteine 340.

It belongs to the radical SAM superfamily. RlmN family. [4Fe-4S] cluster is required as a cofactor.

The protein localises to the cytoplasm. It carries out the reaction adenosine(2503) in 23S rRNA + 2 reduced [2Fe-2S]-[ferredoxin] + 2 S-adenosyl-L-methionine = 2-methyladenosine(2503) in 23S rRNA + 5'-deoxyadenosine + L-methionine + 2 oxidized [2Fe-2S]-[ferredoxin] + S-adenosyl-L-homocysteine. The catalysed reaction is adenosine(37) in tRNA + 2 reduced [2Fe-2S]-[ferredoxin] + 2 S-adenosyl-L-methionine = 2-methyladenosine(37) in tRNA + 5'-deoxyadenosine + L-methionine + 2 oxidized [2Fe-2S]-[ferredoxin] + S-adenosyl-L-homocysteine. In terms of biological role, specifically methylates position 2 of adenine 2503 in 23S rRNA and position 2 of adenine 37 in tRNAs. This is Probable dual-specificity RNA methyltransferase RlmN from Streptococcus pneumoniae (strain Hungary19A-6).